The primary structure comprises 195 residues: Putative NADH dehydrogenase/NAD(P)H nitroreductase CC_0061 (195 aa).

The protein belongs to the nitroreductase family. HadB/RutE subfamily. FMN serves as cofactor.

This is Putative NADH dehydrogenase/NAD(P)H nitroreductase CC_0061 from Caulobacter vibrioides (strain ATCC 19089 / CIP 103742 / CB 15) (Caulobacter crescentus).